Consider the following 395-residue polypeptide: Trans-2-enoyl-CoA reductase [NADH] (395 aa).

NAD(+) contacts are provided by residues 47–52 (GASTGY), 73–74 (FE), 110–111 (DA), and 138–139 (LA). Tyrosine 224 lines the substrate pocket. Tyrosine 234 functions as the Proton donor in the catalytic mechanism. NAD(+) contacts are provided by residues lysine 243 and 272–274 (VVT).

The protein belongs to the TER reductase family. In terms of assembly, monomer.

The enzyme catalyses a 2,3-saturated acyl-CoA + NAD(+) = a (2E)-enoyl-CoA + NADH + H(+). Its pathway is lipid metabolism; fatty acid biosynthesis. Involved in the fatty acid synthesis (FAS II). Catalyzes the reduction of a carbon-carbon double bond in an enoyl moiety that is covalently linked to a coenzyme A (CoA). The sequence is that of Trans-2-enoyl-CoA reductase [NADH] from Ruminiclostridium cellulolyticum (strain ATCC 35319 / DSM 5812 / JCM 6584 / H10) (Clostridium cellulolyticum).